Reading from the N-terminus, the 373-residue chain is Glutamate 5-kinase (373 aa).

Lys-12 contacts ATP. Substrate is bound by residues Ser-52, Asp-139, and Asn-154. Thr-216–Lys-222 serves as a coordination point for ATP. A PUA domain is found at Arg-281–Asn-359.

The protein belongs to the glutamate 5-kinase family.

The protein resides in the cytoplasm. The enzyme catalyses L-glutamate + ATP = L-glutamyl 5-phosphate + ADP. It participates in amino-acid biosynthesis; L-proline biosynthesis; L-glutamate 5-semialdehyde from L-glutamate: step 1/2. In terms of biological role, catalyzes the transfer of a phosphate group to glutamate to form L-glutamate 5-phosphate. The sequence is that of Glutamate 5-kinase from Dehalococcoides mccartyi (strain CBDB1).